The sequence spans 456 residues: Bacteriochlorophyllide d C-12(1)-methyltransferase (456 aa).

The region spanning 178–405 (HAKKYSQLIP…MFEPKKLGGE (228 aa)) is the Radical SAM core domain. C194, C198, and C201 together coordinate [4Fe-4S] cluster.

The protein belongs to the radical SAM superfamily. The cofactor is [4Fe-4S] cluster.

It is found in the cytoplasm. The enzyme catalyses 8-ethyl-12-methyl-3-vinylbacteriochlorophyllide d + S-adenosyl-L-methionine = 8,12-diethyl-3-vinylbacteriochlorophyllide d + S-adenosyl-L-homocysteine + H(+). The protein operates within porphyrin-containing compound metabolism; bacteriochlorophyll biosynthesis (light-independent). Involved in the biosynthesis of the major light-harvesting pigment bacteriochlorophyll c (BChlc), which confers a significant competitive advantage to green sulfur bacteria living at limiting red and near-infrared light intensities. BchR is a methyltransferase that adds a single methyl group to the methyl carbon at the C-12(1) position of 8-ethyl-12-methyl-3-vinylbacteriochlorophyllide d to yield 8,12-diethyl-3-vinylbacteriochlorophyllide d. This Chlorobaculum tepidum (strain ATCC 49652 / DSM 12025 / NBRC 103806 / TLS) (Chlorobium tepidum) protein is Bacteriochlorophyllide d C-12(1)-methyltransferase.